Here is a 1007-residue protein sequence, read N- to C-terminus: Serine/threonine-protein kinase atg1 (1007 aa).

In terms of domain architecture, Protein kinase spans 30–336; sequence YTRLSEIGRG…FDVYFAHKVL (307 aa). Residues 36–44 and Lys-59 contribute to the ATP site; that span reads IGRGSFAVV. The active-site Proton acceptor is Asp-174. 4 disordered regions span residues 343–489, 524–586, 795–817, and 878–900; these read LVAD…KEHA, GGQA…PTSA, RLPS…GSGT, and SRPG…DGGQ. Over residues 373–387 the composition is skewed to basic and acidic residues; that stretch reads MKRENALSGGVRDEP. Over residues 396 to 410 the composition is skewed to polar residues; it reads AMTQSPRPETPSTPM. Positions 477–489 are enriched in basic and acidic residues; that stretch reads KPVEKAKDEKEHA. Low complexity predominate over residues 534 to 555; that stretch reads SGAAPGTPPAGGSSPHASPSKA. The span at 563 to 579 shows a compositional bias: basic and acidic residues; it reads SRADSAHVRQNSYDRRY. The span at 805–817 shows a compositional bias: low complexity; the sequence is SNLSVGSSLGSGT. Positions 887–896 are enriched in basic and acidic residues; the sequence is DRADARRDNE.

Belongs to the protein kinase superfamily. Ser/Thr protein kinase family. APG1/unc-51/ULK1 subfamily. In terms of assembly, homodimer. Forms a ternary complex with ATG13 and ATG17.

The protein resides in the cytoplasm. The protein localises to the preautophagosomal structure membrane. It catalyses the reaction L-seryl-[protein] + ATP = O-phospho-L-seryl-[protein] + ADP + H(+). The enzyme catalyses L-threonyl-[protein] + ATP = O-phospho-L-threonyl-[protein] + ADP + H(+). Serine/threonine protein kinase involved in the cytoplasm to vacuole transport (Cvt) and found to be essential in autophagy, where it is required for the formation of autophagosomes. Involved in the clearance of protein aggregates which cannot be efficiently cleared by the proteasome. Required for selective autophagic degradation of the nucleus (nucleophagy) as well as for mitophagy which contributes to regulate mitochondrial quantity and quality by eliminating the mitochondria to a basal level to fulfill cellular energy requirements and preventing excess ROS production. Also involved in endoplasmic reticulum-specific autophagic process, in selective removal of ER-associated degradation (ERAD) substrates. Plays a key role in ATG9 and ATG23 cycling through the pre-autophagosomal structure and is necessary to promote ATG18 binding to ATG9 through phosphorylation of ATG9. Catalyzes phosphorylation of ATG4, decreasing the interaction between ATG4 and ATG8 and impairing deconjugation of PE-conjugated forms of ATG8. The protein is Serine/threonine-protein kinase atg1 of Aspergillus niger (strain ATCC MYA-4892 / CBS 513.88 / FGSC A1513).